A 395-amino-acid polypeptide reads, in one-letter code: Cysteine synthase 2 (395 aa).

Residues 6-22 (QDLASGIAMGAVFMYLL) form a helical membrane-spanning segment. The residue at position 83 (K83) is an N6-(pyridoxal phosphate)lysine. Pyridoxal 5'-phosphate contacts are provided by residues 228 to 232 (GTGGT) and S335.

Belongs to the cysteine synthase/cystathionine beta-synthase family. The cofactor is pyridoxal 5'-phosphate.

It localises to the mitochondrion. The protein resides in the mitochondrion outer membrane. It catalyses the reaction O-acetyl-L-serine + hydrogen sulfide = L-cysteine + acetate. In terms of biological role, putative cysteine synthase that catalyzes the conversion of O-acetyl-L-serine (OAS) into cysteine, the last step in the cysteine biosynthesis pathway. However, in contrast to cysteine synthase cys11, this CS-like protein seems not to function in cysteine biosynthesis, at least under normal growth conditions, although the transcript is produced. This chain is Cysteine synthase 2 (cys12), found in Schizosaccharomyces pombe (strain 972 / ATCC 24843) (Fission yeast).